A 147-amino-acid polypeptide reads, in one-letter code: Cytochrome c-type biogenesis protein CcmE (147 aa).

Residues 1–7 (MKPRHKR) are Cytoplasmic-facing. A helical; Signal-anchor for type II membrane protein membrane pass occupies residues 8 to 28 (AAIIAGGLAALGIAAYLVLNA). Residues 29–147 (FQSNLVFFFS…QIQKTIKSLK (119 aa)) are Periplasmic-facing. His-121 and Tyr-125 together coordinate heme.

Belongs to the CcmE/CycJ family.

It is found in the cell inner membrane. Its function is as follows. Heme chaperone required for the biogenesis of c-type cytochromes. Transiently binds heme delivered by CcmC and transfers the heme to apo-cytochromes in a process facilitated by CcmF and CcmH. The polypeptide is Cytochrome c-type biogenesis protein CcmE (Albidiferax ferrireducens (strain ATCC BAA-621 / DSM 15236 / T118) (Rhodoferax ferrireducens)).